The chain runs to 154 residues: Endoribonuclease YbeY (154 aa).

3 residues coordinate Zn(2+): His-113, His-117, and His-123.

It belongs to the endoribonuclease YbeY family. Zn(2+) is required as a cofactor.

Its subcellular location is the cytoplasm. In terms of biological role, single strand-specific metallo-endoribonuclease involved in late-stage 70S ribosome quality control and in maturation of the 3' terminus of the 16S rRNA. The chain is Endoribonuclease YbeY from Ehrlichia canis (strain Jake).